The primary structure comprises 354 residues: 3-isopropylmalate dehydrogenase (354 aa).

76–87 (GPRWDGAKERPE) is a binding site for NAD(+). Residues Arg-94, Arg-104, Arg-130, and Asp-215 each contribute to the substrate site. Mg(2+) is bound by residues Asp-215, Asp-239, and Asp-243. 273–285 (GSAPDIAGKNKAN) serves as a coordination point for NAD(+).

This sequence belongs to the isocitrate and isopropylmalate dehydrogenases family. LeuB type 1 subfamily. In terms of assembly, homodimer. The cofactor is Mg(2+). Requires Mn(2+) as cofactor.

Its subcellular location is the cytoplasm. It catalyses the reaction (2R,3S)-3-isopropylmalate + NAD(+) = 4-methyl-2-oxopentanoate + CO2 + NADH. It functions in the pathway amino-acid biosynthesis; L-leucine biosynthesis; L-leucine from 3-methyl-2-oxobutanoate: step 3/4. Its function is as follows. Catalyzes the oxidation of 3-carboxy-2-hydroxy-4-methylpentanoate (3-isopropylmalate) to 3-carboxy-4-methyl-2-oxopentanoate. The product decarboxylates to 4-methyl-2 oxopentanoate. The sequence is that of 3-isopropylmalate dehydrogenase from Bacillus thuringiensis subsp. konkukian (strain 97-27).